Consider the following 215-residue polypeptide: Urease accessory protein UreG (215 aa).

Residue 24–31 participates in GTP binding; the sequence is GPVGSGKT.

The protein belongs to the SIMIBI class G3E GTPase family. UreG subfamily. In terms of assembly, homodimer. UreD, UreF and UreG form a complex that acts as a GTP-hydrolysis-dependent molecular chaperone, activating the urease apoprotein by helping to assemble the nickel containing metallocenter of UreC. The UreE protein probably delivers the nickel.

It localises to the cytoplasm. Facilitates the functional incorporation of the urease nickel metallocenter. This process requires GTP hydrolysis, probably effectuated by UreG. This chain is Urease accessory protein UreG, found in Burkholderia orbicola (strain MC0-3).